The chain runs to 186 residues: Ribosome maturation factor RimP (186 aa).

Belongs to the RimP family.

The protein resides in the cytoplasm. In terms of biological role, required for maturation of 30S ribosomal subunits. The polypeptide is Ribosome maturation factor RimP (Novosphingobium aromaticivorans (strain ATCC 700278 / DSM 12444 / CCUG 56034 / CIP 105152 / NBRC 16084 / F199)).